Consider the following 170-residue polypeptide: Probable host range protein 2 (170 aa).

Positions 145-170 (SDSDSDVDDRAELHKRNNDSDSDDYT) are disordered. The span at 152–163 (DDRAELHKRNND) shows a compositional bias: basic and acidic residues.

It belongs to the poxviridae C7 protein family.

Plays a role for multiplication of the virus in different cell types. The chain is Probable host range protein 2 from Bos taurus (Bovine).